Consider the following 236-residue polypeptide: Lipoarabinomannan carrier protein LprG (236 aa).

Positions 1-26 (MRTPRRHCRRIAVLAAVSIAATVVAG) are cleaved as a signal peptide. A lipid anchor (N-palmitoyl cysteine) is attached at C27. C27 is lipidated: S-diacylglycerol cysteine.

The protein belongs to the LppX/LprAFG lipoprotein family. In terms of processing, modified by Lgt on Cys-27 with an S-linked diacylglyceral, signal peptide is removed by LspA, Cys-27 is further modifed with a fatty acid on its amino group by Lnt yielding a triacylated protein.

The protein localises to the cell inner membrane. Its subcellular location is the secreted. The protein resides in the cell wall. In terms of biological role, helps membrane protein Mb1445c (P55) transport triacylglycerides (TAG) across the inner cell membrane into the periplasm and probably ultimately to the outer membrane. Binds TAG in its hydrophobic cavity and transfers it between lipid bilayers. TAG probably regulates lipid metabolism and growth regulation and plays a structural role in the outer membrane. Binds di- and triacylated phosphatidyl-myo-inositol mannosides (PIMs), and glycolipid lipoglycan modulins lipoarabinomannan (LAM) and lipomannan (LM), facilitating their recognition by TLR2. Required for activity of drug efflux transporter Mb1445c. Required, probably with Mb1445c, for normal surface localization of LAM. Functionally, constitutes a host TLR2 agonist (toll-like receptor). The protein is Lipoarabinomannan carrier protein LprG of Mycobacterium bovis (strain ATCC BAA-935 / AF2122/97).